Reading from the N-terminus, the 742-residue chain is MTTIKTSNLGFPRLGRKREWKKAIESYWAKKISKEELDQTLTDLHKENLLLQKYYHLDSIPVGDFSLYDHILDTSLLFNIIPERFQGRTIDDDLLFDIARGNKDHVASALIKWFNTNYHYIVPEWDNVEPKVSRNVLLDRFKYAQSLNVNAHPVIVGPITFVKLSKGGHQTFEEKVKTLLPLYKEVFESLIDAGAEYIQVDEPILVTDDSESYENITREAYDYFEKASVAKKLVIQTYFERAHLKFLSSLPVGGLGLDFVHDNGYNLKQIEAGDFDKSKTLYAGIIDGRNVWASDIEAKKVLIDKLLAHTNELVIQPSSSLLHVPVSLDDETLDTSVGEGLSFATEKLDELDALRRLFNQNDNFKYDKLKARYERFQNQSFKNLDYDFESVRTSRQSPFAQRIEQQQKRLNLPDLPTTTIGSFPQSREVRKYRADWKNKRITDEAYETFLKNEIARWIKIQEDIGLDVLVHGEFERNDMVEFFGEKLQGFLVTKFGWVQSYGSRAVKPPIIYGDVKWTAPLTVDETVYAQSLTDKPVKGMLTGPVTILNWSFERVDLPRKVVQDQIALAINEEVLALEAAGIKVIQVDEPALREGLPLRSEYHEQYLKDAVLSFKLATSSVRDETQIHTHMCYSQFGQIIHAIHDLDADVISIETSRSHGDLIKDFEDINYDLGIGLGVYDIHSPRIPTKEEITTAINRSLQQIDRSLFWVNPDCGLKTRKEEEVKDALTVLVNAVKAKRQE.

Residues arginine 18–lysine 21 and lysine 112 each bind 5-methyltetrahydropteroyltri-L-glutamate. L-homocysteine contacts are provided by residues isoleucine 420 to serine 422 and glutamate 473. L-methionine is bound by residues isoleucine 420–serine 422 and glutamate 473. Tryptophan 550 is a binding site for 5-methyltetrahydropteroyltri-L-glutamate. An L-homocysteine-binding site is contributed by aspartate 588. L-methionine is bound at residue aspartate 588. Glutamate 594 is a binding site for 5-methyltetrahydropteroyltri-L-glutamate. Histidine 630, cysteine 632, and glutamate 654 together coordinate Zn(2+). The Proton donor role is filled by histidine 683. Residue cysteine 715 participates in Zn(2+) binding.

The protein belongs to the vitamin-B12 independent methionine synthase family. Zn(2+) is required as a cofactor.

It carries out the reaction 5-methyltetrahydropteroyltri-L-glutamate + L-homocysteine = tetrahydropteroyltri-L-glutamate + L-methionine. It participates in amino-acid biosynthesis; L-methionine biosynthesis via de novo pathway; L-methionine from L-homocysteine (MetE route): step 1/1. Catalyzes the transfer of a methyl group from 5-methyltetrahydrofolate to homocysteine resulting in methionine formation. This Staphylococcus aureus (strain bovine RF122 / ET3-1) protein is 5-methyltetrahydropteroyltriglutamate--homocysteine methyltransferase.